Consider the following 493-residue polypeptide: Dipeptide permease D (493 aa).

The Cytoplasmic portion of the chain corresponds to 1-13 (MNKHASQPRAIYY). Residues 14–34 (VVALQIWEYFSFYGMRALLIL) form a helical membrane-spanning segment. Topologically, residues 35 to 48 (YLTNQLKYNDTHAY) are periplasmic. A helical transmembrane segment spans residues 49-69 (ELFSAYCSLVYVTPILGGFLA). At 70 to 77 (DKVLGNRM) the chain is on the cytoplasmic side. Residues 78 to 98 (AVMLGALLMAIGHVVLGASEI) form a helical membrane-spanning segment. The Periplasmic portion of the chain corresponds to 99–100 (HP). A helical transmembrane segment spans residues 101-121 (SFLYLSLAIIVCGYGLFKSNV). The Cytoplasmic portion of the chain corresponds to 122–137 (SCLLGELYEPTDPRRD). The helical transmembrane segment at 138 to 158 (GGFSLMYAAGNVGSIIAPIAC) threads the bilayer. At 159–166 (GYAQEEYS) the chain is on the periplasmic side. Residues 167–187 (WAMGFGLAAVGMIAGLVIFLC) traverse the membrane as a helical segment. Residues 188 to 211 (GNRHFTHTRGVNKKVLRATNFLLP) lie on the Cytoplasmic side of the membrane. Residues 212–232 (NWGWLLVLLVATPALITILFW) form a helical membrane-spanning segment. At 233-234 (KE) the chain is on the periplasmic side. Residues 235-255 (WSVYALIVATIIGLGVLAKIY) traverse the membrane as a helical segment. The Cytoplasmic segment spans residues 256 to 266 (RKAENQKQRKE). Residues 267-287 (LGLIVTLTFFSMLFWAFAQQG) form a helical membrane-spanning segment. The Periplasmic segment spans residues 288–311 (GSSISLYIDRFVNRDMFGYTVPTA). Residues 312 to 332 (MFQSINAFAVMLCGVFLAWVV) traverse the membrane as a helical segment. Topologically, residues 333–343 (KESVAGNRTVR) are cytoplasmic. The chain crosses the membrane as a helical span at residues 344-364 (IWGKFALGLGLMSAGFCILTL). Residues 365-378 (SARWSAMYGHSSLP) lie on the Periplasmic side of the membrane. The helical transmembrane segment at 379–399 (LMVLGLAVMGFAELFIDPVAM) threads the bilayer. The Cytoplasmic portion of the chain corresponds to 400–412 (SQITRIEIPGVTG). Residues 413-433 (VLTGIYMLLSGAIANYLAGVI) form a helical membrane-spanning segment. Over 434–461 (ADQTSQASFDASGAINYSINAYIEVFDQ) the chain is Periplasmic. The chain crosses the membrane as a helical span at residues 462–482 (ITWGALACVGLVLMIWLYQAL). At 483–493 (KFRNRALALES) the chain is on the cytoplasmic side.

It belongs to the major facilitator superfamily. Proton-dependent oligopeptide transporter (POT/PTR) (TC 2.A.17) family. DtpD subfamily.

The protein resides in the cell inner membrane. Probable proton-dependent permease that transports dipeptides. This chain is Dipeptide permease D (dtpD), found in Escherichia coli (strain K12).